Here is a 162-residue protein sequence, read N- to C-terminus: Interleukin-15 (162 aa).

A signal peptide spans 1–29 (MRISKPHLRSVSIQCYLCLLLNSHFLTEA). The propeptide occupies 30–48 (GIHVFILGCFSAGLPKTEA). Intrachain disulfides connect cysteine 83–cysteine 133 and cysteine 90–cysteine 136. N-linked (GlcNAc...) asparagine glycosylation occurs at asparagine 127.

It belongs to the IL-15/IL-21 family.

The protein resides in the secreted. Functionally, cytokine that plays a major role in the development of inflammatory and protective immune responses to microbial invaders and parasites by modulating immune cells of both the innate and adaptive immune systems. Stimulates the proliferation of natural killer cells, T-cells and B-cells and promotes the secretion of several cytokines. In monocytes, induces the production of IL8 and monocyte chemotactic protein 1/CCL2, two chemokines that attract neutrophils and monocytes respectively to sites of infection. Unlike most cytokines, which are secreted in soluble form, IL15 is expressed in association with its high affinity IL15RA on the surface of IL15-producing cells and delivers signals to target cells that express IL2RB and IL2RG receptor subunits. Binding to its receptor triggers the phosphorylation of JAK1 and JAK3 and the recruitment and subsequent phosphorylation of signal transducer and activator of transcription-3/STAT3 and STAT5. In mast cells, induces the rapid tyrosine phosphorylation of STAT6 and thereby controls mast cell survival and release of cytokines such as IL4. The protein is Interleukin-15 (IL15) of Macaca mulatta (Rhesus macaque).